Consider the following 252-residue polypeptide: 4-formylbenzenesulfonate dehydrogenase TsaC1/TsaC2 (252 aa).

NAD(+) contacts are provided by residues 9–36 and Asp62; that span reads IVTG…LVAD. A substrate-binding site is contributed by Ser142. Tyr155 serves as the catalytic Proton acceptor. Residue Lys159 participates in NAD(+) binding.

This sequence belongs to the short-chain dehydrogenases/reductases (SDR) family. As to quaternary structure, homodimer.

The catalysed reaction is 4-formylbenzenesulfonate + NAD(+) + H2O = 4-sulfobenzoate + NADH + 2 H(+). Involved in the toluene-4-sulfonate degradation pathway. Does not discriminate between the sulfonate and the carboxyl substituents and can also be involved in the p-toluenecarboxylate degradation pathway. This chain is 4-formylbenzenesulfonate dehydrogenase TsaC1/TsaC2 (tsaC1), found in Comamonas testosteroni (Pseudomonas testosteroni).